The following is a 782-amino-acid chain: E3 ubiquitin-protein ligase SopA (782 aa).

Residues 137 to 171 (VSVSANNRPTVSEGRTPPVSPSLSLQATSSPSSPA) are disordered. The span at 157–171 (PSLSLQATSSPSSPA) shows a compositional bias: low complexity. Catalysis depends on Cys-753, which acts as the Glycyl thioester intermediate.

The protein belongs to the SopA E3 ligase family. Ubiquitinated in the presence of host E1 ubiquitin-activating enzyme, E2 ubiquitin-conjugating enzyme and ubiquitin.

Its subcellular location is the secreted. The protein resides in the host mitochondrion. The enzyme catalyses S-ubiquitinyl-[E2 ubiquitin-conjugating enzyme]-L-cysteine + [acceptor protein]-L-lysine = [E2 ubiquitin-conjugating enzyme]-L-cysteine + N(6)-ubiquitinyl-[acceptor protein]-L-lysine.. Its function is as follows. Effector proteins function to alter host cell physiology and promote bacterial survival in host tissues. This protein is an E3 ubiquitin ligase that interferes with host's ubiquitination pathway. Required for inducing polymorphonuclear leukocytes migration across the intestinal epithelium. The sequence is that of E3 ubiquitin-protein ligase SopA (sopA) from Salmonella dublin.